We begin with the raw amino-acid sequence, 161 residues long: Calmodulin-like protein (161 aa).

4 EF-hand domains span residues E21–N56, P57–E92, T93–Q128, and F129–Q161. Residues D34, D36, N38, T40, E45, D70, D72, N74, Q76, E81, D106, D108, N110, E117, D142, D144, D146, E148, and E153 each contribute to the Ca(2+) site.

It belongs to the calmodulin family.

Its function is as follows. This protein resembles calmodulin in sequence but possibly resembles troponin C in function. The polypeptide is Calmodulin-like protein (cal-1) (Caenorhabditis elegans).